The sequence spans 342 residues: Farnesyl pyrophosphate synthase 2 (342 aa).

Isopentenyl diphosphate contacts are provided by Lys47, Arg50, and Gln86. Mg(2+)-binding residues include Asp93 and Asp97. A dimethylallyl diphosphate-binding site is contributed by Arg102. Isopentenyl diphosphate is bound at residue Arg103. Dimethylallyl diphosphate-binding residues include Lys190, Thr191, Gln229, Lys246, and Lys255.

This sequence belongs to the FPP/GGPP synthase family. It depends on Mg(2+) as a cofactor.

The protein localises to the cytoplasm. The enzyme catalyses isopentenyl diphosphate + dimethylallyl diphosphate = (2E)-geranyl diphosphate + diphosphate. It catalyses the reaction isopentenyl diphosphate + (2E)-geranyl diphosphate = (2E,6E)-farnesyl diphosphate + diphosphate. Its pathway is isoprenoid biosynthesis; farnesyl diphosphate biosynthesis; farnesyl diphosphate from geranyl diphosphate and isopentenyl diphosphate: step 1/1. It participates in isoprenoid biosynthesis; geranyl diphosphate biosynthesis; geranyl diphosphate from dimethylallyl diphosphate and isopentenyl diphosphate: step 1/1. Its function is as follows. Catalyzes the sequential condensation of isopentenyl pyrophosphate with the allylic pyrophosphates, dimethylallyl pyrophosphate, and then with the resultant geranylpyrophosphate to the ultimate product farnesyl pyrophosphate. In Arabidopsis thaliana (Mouse-ear cress), this protein is Farnesyl pyrophosphate synthase 2 (FPS2).